We begin with the raw amino-acid sequence, 124 residues long: Fluoride-specific ion channel FluC (124 aa).

4 consecutive transmembrane segments (helical) span residues 5 to 25, 36 to 56, 70 to 90, and 100 to 120; these read LVVFVGAGLGGALRHGVNLAA, TMIINIAGSLAMGLLTGWFAV, TGILGGFTTFSTFSLEAFLLM, and LYVLGSVAAGIAGVGASLAVI. Na(+) is bound by residues Gly-74 and Thr-77.

The protein belongs to the fluoride channel Fluc/FEX (TC 1.A.43) family.

It is found in the cell inner membrane. It catalyses the reaction fluoride(in) = fluoride(out). With respect to regulation, na(+) is not transported, but it plays an essential structural role and its presence is essential for fluoride channel function. Functionally, fluoride-specific ion channel. Important for reducing fluoride concentration in the cell, thus reducing its toxicity. This is Fluoride-specific ion channel FluC from Methylobacterium nodulans (strain LMG 21967 / CNCM I-2342 / ORS 2060).